The primary structure comprises 1151 residues: MDEYDKKRRLEHGGSDRSRSSNDNRNSHGSSGNNYRDDRKDDRYYRDDRSHYNNNNNNNNNNNNNNNNNNGNGYRDDRNYSSQNKYQNHHQQSPPQQQQQQQNSSYVPSQPPQQQTQTQQQPHIQAPPPAKPRKSRFDQAPETIPIQAPQQPPMISNQPIFKQQPMYQQPMYQQKQQQPQPPIFQQQQKQQQPPIFQHHQPPPIYQQPPVYQQQQQQQQPVFQQQQQQRVATEAIQFQQTPQQLAIEQERLKQERENEKKIEQANLEEEMKKRREKVEQWRKQKLEQELKASGSSNSGSTSSPPTTTTTTTKTTAATTTATTSPLTIPSQQQQTATTSPIKKKWSLEEEEETAQPLVNTNIEQKEIKLPPTANIPAAAATTTSATINTTTIKQSIEEDDDIDPLDAYMENLNKEANLNLKKSKTSQMIDDDEKLEEESEGEDDGKDKTIKKGKKEMLHTDHTSIKYAEFQKNFYIEVPVLANMTETEVLDFRSELGVKITGKDCPKPIQSWAQAGLTEKVHLLLKKFQYEKPTSIQAQTIPAIMNGRDLIGIARTGSGKTLAFLLPMFRHILAQPKSAPGEGMIALIMSPTRELALQIHVECKKFSKVLGLRTACVYGGASISEQIAELKRGADIVVCTPGRMIDILCANNRRITNLRRVTFLVLDEADRMFDMGFGPQINCIVDSIRPDRQTIMFSATFPPKVENVAKKILNKPLEIIAGGRSIVSSDIEQFVEVRPTETRFRRLIELLSIWYHKGQILIFTNRQETTDNLYRQLSNSQYQCLSLHGSKDQTDRDETISDFKNKVKTILIATPLASRGLDIKDLNLVVNFDCPDHLEDYVHRVGRTGRAGNRGTAYTFITPDEERFSSSIIKALEQSGSKVPDELRKLNDTYEKKRKEGKDVLLAPTGFTGRGHKFDAAEEDKKNIERKQQRKAYGIEEEEEEEDEDKEKAEKEKLAAASAEKEKQLLSEKEKLDPATTNTIVIPGVDGTIITPSSLLQTDPSVPVGQQAINQIFGISQVTSSEEAIKKLQLAAQLGMKGNIQKLNNQITPLNQTHFIEELEINDYSQQARWKVTHKDALLEITNFTNTTITTKGTFFPPNKIPAPGERKLYLYIEGPSDASVKNAKSDIKKILDEVQSTHQSTGKYSVF.

Composition is skewed to basic and acidic residues over residues 1–26 and 35–51; these read MDEY…DNRN and YRDD…DRSH. Disordered stretches follow at residues 1-138, 166-224, 287-358, and 424-449; these read MDEY…SRFD, MYQQ…VFQQ, QELK…PLVN, and TSQM…DKTI. The span at 52-73 shows a compositional bias: low complexity; it reads YNNNNNNNNNNNNNNNNNNGNG. Residues 81 to 90 are compositionally biased toward polar residues; the sequence is SSQNKYQNHH. Low complexity-rich tracts occupy residues 91-124, 166-199, 207-224, and 291-339; these read QQSP…QPHI, MYQQ…FQHH, QPPV…VFQQ, and ASGS…TTSP. Positions 428-443 are enriched in acidic residues; that stretch reads IDDDEKLEEESEGEDD. The short motif at 509–537 is the Q motif element; sequence QSWAQAGLTEKVHLLLKKFQYEKPTSIQA. A Helicase ATP-binding domain is found at 540 to 718; that stretch reads IPAIMNGRDL…KKILNKPLEI (179 aa). Residue 553–560 participates in ATP binding; the sequence is ARTGSGKT. The DEAD box motif lies at 666–669; sequence DEAD. In terms of domain architecture, Helicase C-terminal spans 729–890; the sequence is DIEQFVEVRP…KVPDELRKLN (162 aa). The segment at 904–972 is disordered; sequence LLAPTGFTGR…EKEKQLLSEK (69 aa). Positions 915 to 930 are enriched in basic and acidic residues; sequence HKFDAAEEDKKNIERK. The segment covering 938–948 has biased composition (acidic residues); the sequence is IEEEEEEEDED. The segment covering 949–972 has biased composition (basic and acidic residues); that stretch reads KEKAEKEKLAAASAEKEKQLLSEK.

It belongs to the DEAD box helicase family. DDX46/PRP5 subfamily. Component of the 17S U2 SnRNP complex, a ribonucleoprotein complex that contains small nuclear RNA (snRNA) U2 and a number of specific proteins.

It is found in the nucleus speckle. The catalysed reaction is ATP + H2O = ADP + phosphate + H(+). Functionally, component of the 17S U2 SnRNP complex of the spliceosome, a large ribonucleoprotein complex that removes introns from transcribed pre-mRNAs. The polypeptide is ATP-dependent RNA helicase ddx46 (helB1) (Dictyostelium discoideum (Social amoeba)).